Consider the following 344-residue polypeptide: MVPAACMLLWALLLSLESRAAGAEDQKTNPTATTVRMQRVSFHFGGPARSLRSTNPTARTSISRKLRVTLEDENDALATADRLAVPAAAELLSTVTGYSRSSLSNSGDWEEDGSLEEGVVDTRKTTNNPITIFSTTNTVGSSSTTGRFVANSQEREIRLTTDMRSPSSKTTVDLSSETTLQQWSTPGSTPSPWPKPSLTAMPSPEDLRVVLMPWGPWHCHCKSGTMSRSRAGKLHGLSGRLRVGALNELRTEHRPCTYQLCTCNRQLEECPLDSSLCTDHSCSTHVASTISPIPVHLRRRPILPPTSPSPSPALAFWKRVRIGLEDIWNSLSSVFTETQPIERT.

An N-terminal signal peptide occupies residues 1–22 (MVPAACMLLWALLLSLESRAAG). Positions 162-182 (DMRSPSSKTTVDLSSETTLQQ) are enriched in polar residues. The disordered stretch occupies residues 162 to 197 (DMRSPSSKTTVDLSSETTLQQWSTPGSTPSPWPKPS).

In terms of processing, phosphorylation sites are present in the extracellular medium.

The protein localises to the secreted. In terms of biological role, involved in control of cellular proliferation. Onconcogenic modifier contributing to the tumor suppressor function of DNMT3B. The polypeptide is Protein MENT (Ment) (Rattus norvegicus (Rat)).